Reading from the N-terminus, the 199-residue chain is dITP/XTP pyrophosphatase (199 aa).

7 to 12 (SNNRGK) contacts substrate. Catalysis depends on aspartate 68, which acts as the Proton acceptor. Mg(2+) is bound at residue aspartate 68. Residues alanine 69, 154 to 157 (FGFD), lysine 177, and 182 to 183 (HR) contribute to the substrate site.

Belongs to the HAM1 NTPase family. Homodimer. Mg(2+) is required as a cofactor.

It catalyses the reaction XTP + H2O = XMP + diphosphate + H(+). The catalysed reaction is dITP + H2O = dIMP + diphosphate + H(+). The enzyme catalyses ITP + H2O = IMP + diphosphate + H(+). Its function is as follows. Pyrophosphatase that catalyzes the hydrolysis of nucleoside triphosphates to their monophosphate derivatives, with a high preference for the non-canonical purine nucleotides XTP (xanthosine triphosphate), dITP (deoxyinosine triphosphate) and ITP. Seems to function as a house-cleaning enzyme that removes non-canonical purine nucleotides from the nucleotide pool, thus preventing their incorporation into DNA/RNA and avoiding chromosomal lesions. This is dITP/XTP pyrophosphatase from Albidiferax ferrireducens (strain ATCC BAA-621 / DSM 15236 / T118) (Rhodoferax ferrireducens).